A 237-amino-acid polypeptide reads, in one-letter code: MRKITLALSAACLLFSLNNAVVARASAPTPLYTGTTAAILAEQAPIHWVSVAQIENSLMGRAPMAVGFDIDDTVLFSSPGFWRGKKTFSPASEEYLKNPEFWEKMNNGWDEFSIPKEVGRALIAMHVKRGDSIYFVTGRSQTKTETVSKTLQGDFAIPSANMNPVIFAGDKAGQNTKTQWLEQKNIKVFYGDSDNDITAARDVGARGIRVLRASNSTYRPLPMAGAFGEEVIVNSEY.

The N-terminal stretch at 1-25 (MRKITLALSAACLLFSLNNAVVARA) is a signal peptide. Asp-69 functions as the Nucleophile in the catalytic mechanism. Mg(2+) is bound by residues Asp-69 and Asp-71. Residue Asp-71 is the Proton donor of the active site. Substrate-binding positions include 137-138 (TG) and Lys-177. A Mg(2+)-binding site is contributed by Asp-192.

The protein belongs to the class B bacterial acid phosphatase family. In terms of assembly, homotetramer. Mg(2+) serves as cofactor.

The protein localises to the periplasm. It carries out the reaction a phosphate monoester + H2O = an alcohol + phosphate. In terms of biological role, dephosphorylates several organic phosphate monoesters. Also has a phosphotransferase activity catalyzing the transfer of low-energy phosphate groups from organic phosphate monoesters to free hydroxyl groups of various organic compounds. This chain is Class B acid phosphatase, found in Enterobacter sp. (strain 638).